Reading from the N-terminus, the 91-residue chain is RNA-binding protein Hfq (91 aa).

The 60-residue stretch at 9 to 68 (DPFLNALRRERVPVSVYLVNGIKLQGTIESFDQFVVLLRNTVSQMVYKHAISTVVPARNV) folds into the Sm domain.

The protein belongs to the Hfq family. As to quaternary structure, homohexamer.

Functionally, RNA chaperone that binds small regulatory RNA (sRNAs) and mRNAs to facilitate mRNA translational regulation in response to envelope stress, environmental stress and changes in metabolite concentrations. Also binds with high specificity to tRNAs. The sequence is that of RNA-binding protein Hfq from Stenotrophomonas maltophilia (strain K279a).